A 78-amino-acid chain; its full sequence is MEGNITDGLKYVGAGLATLGMIGSALGVGNIFASFLDAAMRNPSAAPQQTGNLFIGMALAEALGIFSVLIAILILFVA.

The next 2 membrane-spanning stretches (helical) occupy residues Leu-16–Leu-36 and Met-57–Val-77.

This sequence belongs to the ATPase C chain family. As to quaternary structure, F-type ATPases have 2 components, F(1) - the catalytic core - and F(0) - the membrane proton channel. F(1) has five subunits: alpha(3), beta(3), gamma(1), delta(1), epsilon(1). F(0) has three main subunits: a(1), b(2) and c(10-14). The alpha and beta chains form an alternating ring which encloses part of the gamma chain. F(1) is attached to F(0) by a central stalk formed by the gamma and epsilon chains, while a peripheral stalk is formed by the delta and b chains.

The protein resides in the cell inner membrane. F(1)F(0) ATP synthase produces ATP from ADP in the presence of a proton or sodium gradient. F-type ATPases consist of two structural domains, F(1) containing the extramembraneous catalytic core and F(0) containing the membrane proton channel, linked together by a central stalk and a peripheral stalk. During catalysis, ATP synthesis in the catalytic domain of F(1) is coupled via a rotary mechanism of the central stalk subunits to proton translocation. In terms of biological role, key component of the F(0) channel; it plays a direct role in translocation across the membrane. A homomeric c-ring of between 10-14 subunits forms the central stalk rotor element with the F(1) delta and epsilon subunits. This Hyphomonas neptunium (strain ATCC 15444) protein is ATP synthase subunit c.